The following is a 79-amino-acid chain: Large ribosomal subunit protein uL29 (79 aa).

This sequence belongs to the universal ribosomal protein uL29 family.

In Nocardia farcinica (strain IFM 10152), this protein is Large ribosomal subunit protein uL29.